The sequence spans 988 residues: Kinesin-like protein CIN8 (988 aa).

The region spanning 33–470 (NILVAVRCRG…LEYASKAKNI (438 aa)) is the Kinesin motor domain. 125–132 (GMTSTGKT) lines the ATP pocket. The segment at 206 to 301 (FDSNVNGTSA…NSNNTNQQQS (96 aa)) is disordered. A compositionally biased stretch (low complexity) spans 208–237 (SNVNGTSASGSSSRSSSRNNSPRSAPDNSR). A compositionally biased stretch (polar residues) spans 248–280 (HNTTGNSKISNNNHNKFSRFKQTSQESTRAHAS). Positions 281-301 (NNHQNVHIPNNNSNNTNQQQS) are enriched in low complexity. Coiled coils occupy residues 514-619 (EHYK…ELQQ) and 707-769 (KLAE…MQNF). Positions 965–974 (ALQEKRKPED) are enriched in basic and acidic residues. The interval 965 to 988 (ALQEKRKPEDEVLLQAKLQRRNPD) is disordered.

The protein belongs to the TRAFAC class myosin-kinesin ATPase superfamily. Kinesin family. BimC subfamily.

Its subcellular location is the cytoplasm. The protein resides in the cytoskeleton. It is found in the spindle. Functionally, elongates the mitotic spindle by interacting with spindle microtubules to generate an outward force pushing spindle poles apart. Following spindle assembly, CIN8 and KIP1 apparently act to oppose a force, possibly generated by KAR3, that draws separated poles back together. The sequence is that of Kinesin-like protein CIN8 (CIN8) from Candida glabrata (strain ATCC 2001 / BCRC 20586 / JCM 3761 / NBRC 0622 / NRRL Y-65 / CBS 138) (Yeast).